Reading from the N-terminus, the 138-residue chain is Basic phospholipase A2 vaspin B chain (138 aa).

The N-terminal stretch at 1–16 (MRILWIVAVCLIGVEG) is a signal peptide. 7 disulfides stabilise this stretch: Cys42–Cys131, Cys44–Cys60, Cys59–Cys111, Cys65–Cys138, Cys66–Cys104, Cys73–Cys97, and Cys91–Cys102. Ca(2+) contacts are provided by Tyr43, Gly45, and Gly47. Residue His63 is part of the active site. Residue Asp64 coordinates Ca(2+). Asp105 is a catalytic residue.

It belongs to the phospholipase A2 family. Group II subfamily. D49 sub-subfamily. In terms of assembly, heterodimer of a weakly toxic basic protein having phospholipase A2 activity (B chain (AC Q8JFG1)) and a non-toxic acidic protein functioning as its inhibitor (A chain). It depends on Ca(2+) as a cofactor. As to expression, expressed by the venom gland.

Its subcellular location is the secreted. It carries out the reaction a 1,2-diacyl-sn-glycero-3-phosphocholine + H2O = a 1-acyl-sn-glycero-3-phosphocholine + a fatty acid + H(+). Functionally, heterodimer: postsynaptic neurotoxin. In terms of biological role, monomer: snake venom phospholipase A2 (PLA2) that shows postsynaptic neurotoxicity. PLA2 catalyzes the calcium-dependent hydrolysis of the 2-acyl groups in 3-sn-phosphoglycerides. The polypeptide is Basic phospholipase A2 vaspin B chain (Vipera aspis aspis (Aspic viper)).